The primary structure comprises 157 residues: ATP synthase subunit b (157 aa).

Residues 11 to 31 (LIMFAMFTWFCMKFIWPPIVM) traverse the membrane as a helical segment.

It belongs to the ATPase B chain family. In terms of assembly, F-type ATPases have 2 components, F(1) - the catalytic core - and F(0) - the membrane proton channel. F(1) has five subunits: alpha(3), beta(3), gamma(1), delta(1), epsilon(1). F(0) has three main subunits: a(1), b(2) and c(10-14). The alpha and beta chains form an alternating ring which encloses part of the gamma chain. F(1) is attached to F(0) by a central stalk formed by the gamma and epsilon chains, while a peripheral stalk is formed by the delta and b chains.

The protein localises to the cell inner membrane. Its function is as follows. F(1)F(0) ATP synthase produces ATP from ADP in the presence of a proton or sodium gradient. F-type ATPases consist of two structural domains, F(1) containing the extramembraneous catalytic core and F(0) containing the membrane proton channel, linked together by a central stalk and a peripheral stalk. During catalysis, ATP synthesis in the catalytic domain of F(1) is coupled via a rotary mechanism of the central stalk subunits to proton translocation. Functionally, component of the F(0) channel, it forms part of the peripheral stalk, linking F(1) to F(0). This Vesicomyosocius okutanii subsp. Calyptogena okutanii (strain HA) protein is ATP synthase subunit b.